We begin with the raw amino-acid sequence, 790 residues long: LPS-assembly protein LptD (790 aa).

Residues 1–20 (MRMLRWLILSAFSVAGAVQA) form the signal peptide.

The protein belongs to the LptD family. In terms of assembly, component of the lipopolysaccharide transport and assembly complex. Interacts with LptE and LptA.

The protein resides in the cell outer membrane. Its function is as follows. Together with LptE, is involved in the assembly of lipopolysaccharide (LPS) at the surface of the outer membrane. This is LPS-assembly protein LptD from Bordetella bronchiseptica (strain ATCC BAA-588 / NCTC 13252 / RB50) (Alcaligenes bronchisepticus).